Here is a 115-residue protein sequence, read N- to C-terminus: NADH-ubiquinone oxidoreductase chain 3 (115 aa).

Helical transmembrane passes span 4–24 (ILTLFINITLSLCLISIAFWL), 55–75 (FFLVGITFLLFDLEIALLLPL), and 84–104 (SYLTMTVSFMLVSALALGLAY).

It belongs to the complex I subunit 3 family. In terms of assembly, core subunit of respiratory chain NADH dehydrogenase (Complex I) which is composed of 45 different subunits. Interacts with TMEM186. Interacts with TMEM242.

The protein localises to the mitochondrion inner membrane. The catalysed reaction is a ubiquinone + NADH + 5 H(+)(in) = a ubiquinol + NAD(+) + 4 H(+)(out). Functionally, core subunit of the mitochondrial membrane respiratory chain NADH dehydrogenase (Complex I) which catalyzes electron transfer from NADH through the respiratory chain, using ubiquinone as an electron acceptor. Essential for the catalytic activity of complex I. This is NADH-ubiquinone oxidoreductase chain 3 from Necromys lactens (Rufous-bellied bolo mouse).